Here is a 410-residue protein sequence, read N- to C-terminus: Peptidase T (410 aa).

Histidine 77 contacts Zn(2+). Residue aspartate 79 is part of the active site. Aspartate 140 provides a ligand contact to Zn(2+). Glutamate 174 (proton acceptor) is an active-site residue. Zn(2+)-binding residues include glutamate 175, aspartate 197, and histidine 379.

This sequence belongs to the peptidase M20B family. Zn(2+) is required as a cofactor.

The protein localises to the cytoplasm. The catalysed reaction is Release of the N-terminal residue from a tripeptide.. Its function is as follows. Cleaves the N-terminal amino acid of tripeptides. This is Peptidase T from Desulfitobacterium hafniense (strain Y51).